The primary structure comprises 244 residues: MSDMAMIRIGILIAGLLLVAAIFLFGRPKKSPQGRRVDKDDTQPRERREPVISSGVDADGMPFERSDTGAEQSELELDDQDGAGGNDVGKRPNQDFDKIVSLFVAAKAGQVLRGEDVVVAAEKTGLVFGHMNVFHRLVEGHPERGPIFSMASILKPGSFDMANIREMQTPAIAFFLTLPAPMTALDAWEKMLPTVQRMAELLDGVVLDDSRNALGRQRVAHIRDELRAYDRQHQAPPLTKSPRW.

Residues 1-4 lie on the Periplasmic side of the membrane; it reads MSDM. A helical membrane pass occupies residues 5-25; sequence AMIRIGILIAGLLLVAAIFLF. The Cytoplasmic portion of the chain corresponds to 26–244; that stretch reads GRPKKSPQGR…APPLTKSPRW (219 aa). Residues 30 to 91 are disordered; it reads KSPQGRRVDK…GAGGNDVGKR (62 aa). The segment covering 35-50 has biased composition (basic and acidic residues); that stretch reads RRVDKDDTQPRERREP.

Belongs to the ZipA family. As to quaternary structure, interacts with FtsZ via their C-terminal domains.

It is found in the cell inner membrane. Its function is as follows. Essential cell division protein that stabilizes the FtsZ protofilaments by cross-linking them and that serves as a cytoplasmic membrane anchor for the Z ring. Also required for the recruitment to the septal ring of downstream cell division proteins. This Xanthomonas campestris pv. campestris (strain ATCC 33913 / DSM 3586 / NCPPB 528 / LMG 568 / P 25) protein is Cell division protein ZipA.